A 260-amino-acid chain; its full sequence is Segregation and condensation protein A (260 aa).

The protein belongs to the ScpA family. As to quaternary structure, component of a cohesin-like complex composed of ScpA, ScpB and the Smc homodimer, in which ScpA and ScpB bind to the head domain of Smc. The presence of the three proteins is required for the association of the complex with DNA.

It is found in the cytoplasm. Participates in chromosomal partition during cell division. May act via the formation of a condensin-like complex containing Smc and ScpB that pull DNA away from mid-cell into both cell halves. The polypeptide is Segregation and condensation protein A (Halalkalibacterium halodurans (strain ATCC BAA-125 / DSM 18197 / FERM 7344 / JCM 9153 / C-125) (Bacillus halodurans)).